A 382-amino-acid chain; its full sequence is 2-carboxy-1,4-naphthoquinone phytyltransferase, chloroplastic (382 aa).

The transit peptide at 1–66 (MVNFVSLCDI…RRNLRVRPIF (66 aa)) directs the protein to the chloroplast. Transmembrane regions (helical) follow at residues 99 to 119 (VALV…GLFL), 123 to 143 (YVTL…SNDV), 168 to 188 (TLAA…WTSL), 196 to 216 (ILLL…PFRL), 224 to 244 (PLCF…LLGS), 257 to 277 (VLSS…CSHF), 323 to 343 (ILPL…NLVS), and 361 to 381 (YYCV…LVIA).

Belongs to the MenA family. Type 2 subfamily.

The protein resides in the plastid. The protein localises to the chloroplast membrane. The catalysed reaction is 2-carboxy-1,4-naphthoquinone + phytyl diphosphate + H(+) = demethylphylloquinone + CO2 + diphosphate. Involved in the synthesis of phylloquinone (vitamin K1). Catalyzes the transfer of a prenyl chain to 2-carboxy-1,4-naphthoquinone. The protein is 2-carboxy-1,4-naphthoquinone phytyltransferase, chloroplastic (ABC4) of Arabidopsis thaliana (Mouse-ear cress).